A 651-amino-acid chain; its full sequence is Protein SCARECROW 1 (651 aa).

Disordered stretches follow at residues 1–33 (MGSSSLLLFPSSSSSATHSSYSPSSSSHAITSL) and 188–277 (SDPA…KQRD). Positions 190–228 (PAPPPPPPPSHPALLPPDATAPPPPPTSVAALPPPPPPQ) are enriched in pro residues. Positions 253–280 (TAEETAAAAAAAKERKEEQRRKQRDEEG) form a coiled coil. The segment covering 254–263 (AEETAAAAAA) has biased composition (low complexity). A compositionally biased stretch (basic and acidic residues) spans 264-277 (AKERKEEQRRKQRD). Positions 274–644 (KQRDEEGLHL…LCLLTASAWR (371 aa)) constitute a GRAS domain. Positions 281–345 (LHLLTLLLQC…VSSCLGLYAP (65 aa)) are leucine repeat I (LRI). The LxCxE motif signature appears at 288–292 (LQCAE). The tract at residues 364–429 (FQVFNGISPF…GGPPRVRLTG (66 aa)) is VHIID. Residues 395 to 399 (VHIID) carry the VHIID motif. A leucine repeat II (LRII) region spans residues 439–471 (ATGKRLSDFADTLGLPFEFCPVADKAGNLDPEK). A PFYRE region spans residues 480–567 (VAVHWLRHSL…QQLLSREIRN (88 aa)). Residues 570–644 (AVGGPARTGD…LCLLTASAWR (75 aa)) form an SAW region.

Belongs to the GRAS family. Interacts with SHR1, but not with SHR2. As to expression, expressed in the initial daughter cell before its asymmetric division and remains expressed in the endodermal cell layer after the division.

Its subcellular location is the nucleus. In terms of biological role, transcription factor required for quiescent center cells specification and maintenance of surrounding stem cells, and for the asymmetric cell division involved in radial pattern formation in roots. Essential for cell division but not differentiation of the ground tissue. Regulates the radial organization of the shoot axial organs. Restricts SHR movment and sequesters it into the nucleus of the endodermis. The sequence is that of Protein SCARECROW 1 (SCR1) from Oryza sativa subsp. japonica (Rice).